A 126-amino-acid chain; its full sequence is Aspartate 1-decarboxylase (126 aa).

Ser25 acts as the Schiff-base intermediate with substrate; via pyruvic acid in catalysis. Position 25 is a pyruvic acid (Ser) (Ser25). Thr57 is a substrate binding site. Tyr58 acts as the Proton donor in catalysis. 73–75 serves as a coordination point for substrate; it reads GAA.

This sequence belongs to the PanD family. As to quaternary structure, heterooctamer of four alpha and four beta subunits. Pyruvate serves as cofactor. Post-translationally, is synthesized initially as an inactive proenzyme, which is activated by self-cleavage at a specific serine bond to produce a beta-subunit with a hydroxyl group at its C-terminus and an alpha-subunit with a pyruvoyl group at its N-terminus.

The protein resides in the cytoplasm. The catalysed reaction is L-aspartate + H(+) = beta-alanine + CO2. The protein operates within cofactor biosynthesis; (R)-pantothenate biosynthesis; beta-alanine from L-aspartate: step 1/1. In terms of biological role, catalyzes the pyruvoyl-dependent decarboxylation of aspartate to produce beta-alanine. In Salmonella dublin (strain CT_02021853), this protein is Aspartate 1-decarboxylase.